Here is an 87-residue protein sequence, read N- to C-terminus: Small ribosomal subunit protein eS21B (87 aa).

Met-1 carries the N-acetylmethionine modification.

Belongs to the eukaryotic ribosomal protein eS21 family. As to quaternary structure, component of the small ribosomal subunit (SSU). Mature yeast ribosomes consist of a small (40S) and a large (60S) subunit. The 40S small subunit contains 1 molecule of ribosomal RNA (18S rRNA) and 33 different proteins (encoded by 57 genes). The large 60S subunit contains 3 rRNA molecules (25S, 5.8S and 5S rRNA) and 46 different proteins (encoded by 81 genes). In terms of processing, N-terminally acetylated by acetyltransferase NatB.

Its subcellular location is the cytoplasm. In terms of biological role, component of the ribosome, a large ribonucleoprotein complex responsible for the synthesis of proteins in the cell. The small ribosomal subunit (SSU) binds messenger RNAs (mRNAs) and translates the encoded message by selecting cognate aminoacyl-transfer RNA (tRNA) molecules. The large subunit (LSU) contains the ribosomal catalytic site termed the peptidyl transferase center (PTC), which catalyzes the formation of peptide bonds, thereby polymerizing the amino acids delivered by tRNAs into a polypeptide chain. The nascent polypeptides leave the ribosome through a tunnel in the LSU and interact with protein factors that function in enzymatic processing, targeting, and the membrane insertion of nascent chains at the exit of the ribosomal tunnel. eS21 is required for the processing of the 20S rRNA-precursor to mature 18S rRNA in a late step of the maturation of 40S ribosomal subunits. Has a physiological role leading to 18S rRNA stability. This is Small ribosomal subunit protein eS21B from Saccharomyces cerevisiae (strain ATCC 204508 / S288c) (Baker's yeast).